The sequence spans 401 residues: Tyrosine--tRNA ligase (401 aa).

A 'HIGH' region motif is present at residues 42–51 (PTAPDIHLGH). A 'KMSKS' region motif is present at residues 226 to 230 (KMSKS). Position 229 (Lys-229) interacts with ATP. Positions 334–394 (MGLATLLKEA…GKRKFARVRL (61 aa)) constitute an S4 RNA-binding domain.

The protein belongs to the class-I aminoacyl-tRNA synthetase family. TyrS type 2 subfamily. Homodimer.

The protein localises to the cytoplasm. The catalysed reaction is tRNA(Tyr) + L-tyrosine + ATP = L-tyrosyl-tRNA(Tyr) + AMP + diphosphate + H(+). Its function is as follows. Catalyzes the attachment of tyrosine to tRNA(Tyr) in a two-step reaction: tyrosine is first activated by ATP to form Tyr-AMP and then transferred to the acceptor end of tRNA(Tyr). This chain is Tyrosine--tRNA ligase, found in Haemophilus influenzae (strain ATCC 51907 / DSM 11121 / KW20 / Rd).